We begin with the raw amino-acid sequence, 111 residues long: Cytochrome c (111 aa).

Residue A1 is modified to N-acetylalanine. Positions 22, 25, and 26 each coordinate heme c. K80 carries the post-translational modification N6,N6,N6-trimethyllysine. Residue M88 participates in heme c binding. Residue K94 is modified to N6,N6,N6-trimethyllysine.

It belongs to the cytochrome c family. Binds 1 heme c group covalently per subunit.

The protein localises to the mitochondrion intermembrane space. Its function is as follows. Electron carrier protein. The oxidized form of the cytochrome c heme group can accept an electron from the heme group of the cytochrome c1 subunit of cytochrome reductase. Cytochrome c then transfers this electron to the cytochrome oxidase complex, the final protein carrier in the mitochondrial electron-transport chain. The chain is Cytochrome c from Guizotia abyssinica (Niger).